Consider the following 320-residue polypeptide: Cytochrome f (320 aa).

An N-terminal signal peptide occupies residues 1 to 35 (MQMRNTFSWIKEEIIRFIAVSLIIYIITRAPISNA). Heme-binding residues include Tyr-36, Cys-56, Cys-59, and His-60. The chain crosses the membrane as a helical span at residues 286-306 (VQGLLLFLASIILAQIFLVLK).

This sequence belongs to the cytochrome f family. In terms of assembly, the 4 large subunits of the cytochrome b6-f complex are cytochrome b6, subunit IV (17 kDa polypeptide, petD), cytochrome f and the Rieske protein, while the 4 small subunits are PetG, PetL, PetM and PetN. The complex functions as a dimer. The cofactor is heme.

It localises to the plastid. The protein localises to the chloroplast thylakoid membrane. Functionally, component of the cytochrome b6-f complex, which mediates electron transfer between photosystem II (PSII) and photosystem I (PSI), cyclic electron flow around PSI, and state transitions. This is Cytochrome f from Morus indica (Mulberry).